A 222-amino-acid polypeptide reads, in one-letter code: Translation initiation factor 6 (222 aa).

The protein belongs to the eIF-6 family.

Functionally, binds to the 50S ribosomal subunit and prevents its association with the 30S ribosomal subunit to form the 70S initiation complex. The chain is Translation initiation factor 6 from Methanocorpusculum labreanum (strain ATCC 43576 / DSM 4855 / Z).